A 113-amino-acid chain; its full sequence is U11-theraphotoxin-Hhn1a (113 aa).

An N-terminal signal peptide occupies residues methionine 1–alanine 21. Residues aspartate 22 to arginine 74 constitute a propeptide that is removed on maturation. Positions glutamate 61 to aspartate 83 are disordered. Cystine bridges form between cysteine 75/cysteine 90, cysteine 82/cysteine 95, and cysteine 89/cysteine 110.

This sequence belongs to the neurotoxin 14 (magi-1) family. 01 (HNTX-16) subfamily. As to expression, expressed by the venom gland.

Its subcellular location is the secreted. Its function is as follows. Probable ion channel inhibitor. The chain is U11-theraphotoxin-Hhn1a from Cyriopagopus hainanus (Chinese bird spider).